Reading from the N-terminus, the 121-residue chain is Perlustrin-like protein (121 aa).

Residues 1 to 23 (MKFGVGFLLSCLVALNTVQNMLA) form the signal peptide. One can recognise an IGFBP N-terminal domain in the interval 24 to 104 (LSCLPCDFDT…FDFKGTCQES (81 aa)). 6 disulfides stabilise this stretch: Cys26-Cys52, Cys29-Cys54, Cys36-Cys55, Cys45-Cys58, Cys66-Cys79, and Cys73-Cys101. 3 N-linked (GlcNAc...) asparagine glycosylation sites follow: Asn68, Asn81, and Asn117.

Component of the acid-insoluble organic matrix of calcified layers of the shell (at protein level).

Its subcellular location is the secreted. The sequence is that of Perlustrin-like protein from Lottia gigantea (Giant owl limpet).